The primary structure comprises 166 residues: ATP synthase subunit b (166 aa).

A helical transmembrane segment spans residues 10-30 (LLFWMIVSFGIVFVILSKYGF).

Belongs to the ATPase B chain family. F-type ATPases have 2 components, F(1) - the catalytic core - and F(0) - the membrane proton channel. F(1) has five subunits: alpha(3), beta(3), gamma(1), delta(1), epsilon(1). F(0) has three main subunits: a(1), b(2) and c(10-14). The alpha and beta chains form an alternating ring which encloses part of the gamma chain. F(1) is attached to F(0) by a central stalk formed by the gamma and epsilon chains, while a peripheral stalk is formed by the delta and b chains.

The protein localises to the cell inner membrane. Its function is as follows. F(1)F(0) ATP synthase produces ATP from ADP in the presence of a proton or sodium gradient. F-type ATPases consist of two structural domains, F(1) containing the extramembraneous catalytic core and F(0) containing the membrane proton channel, linked together by a central stalk and a peripheral stalk. During catalysis, ATP synthesis in the catalytic domain of F(1) is coupled via a rotary mechanism of the central stalk subunits to proton translocation. In terms of biological role, component of the F(0) channel, it forms part of the peripheral stalk, linking F(1) to F(0). The sequence is that of ATP synthase subunit b from Parabacteroides distasonis (strain ATCC 8503 / DSM 20701 / CIP 104284 / JCM 5825 / NCTC 11152).